Reading from the N-terminus, the 385-residue chain is Phosphotransferase FrzJ (385 aa).

ATP contacts are provided by asparagine 38 and lysine 59. The active site involves aspartate 245.

The protein belongs to the methylthioribose kinase family. As to quaternary structure, monomer.

It catalyses the reaction (1S,3S,6S,7S,8S,9S)-6-[(4-methoxyphenyl)methyl]-3-(methylamino)-5-azatricyclo[6.3.1.0(1,5)]dodecane-7,9-diol + ATP = (-)-FR901483 + ADP + 2 H(+). It participates in secondary metabolite biosynthesis. In terms of biological role, phosphotransferase; part of the gene cluster that mediates the biosynthesis of the alkaloid (-)-FR901483, a potent immunosuppressant that shows efficacy in animal models and a probable inhibitor of purine nucleotide biosynthesis by targeting phosphoribosylpyrophosphate amidotransferase (PPAT). FrzJ catalyzes the last step of the pathway by phosphorylating the C4'-OH of dephospho-(-)-FR901483 to produce (-)-FR901483. The biosynthesis of (-)-FR901483 starts with the condensation of two L-tyrosines to yield (S,S)-dityrosyl-piperazine. This process occurs in 3 steps with the non-canonical nonribosomal peptide synthetase FrzA catalyzing the reduction of L-tyrosine into L-tyrosinal, the spontaneous condensation of 2 L-tyrosinal units, and the subsequent reduction by the NmrA-like family domain-containing oxidoreductase FrzB. The cytochrome P450 monooxygenase FrzC then performs coupling between N10 and C1' to morph the piperazine into a 1,4-diazabicyclo[3.2.1]octane spiro-fused to a 2,5-cyclohexadienone. The dienone portion is further reduced to cyclohexanone by the flavin-dependent reductase FrzD. The methyltranserases (MTs) FrzE and FrzF are then involved in the methylation at the C10' amine and the C4 phenolic oxygen, respectively. The order of the two MTs appear to be interchangeable. Cleavage of the C9-N10' bond by the dioxygenase FrzG then leads to formation of a conjugated iminium. In addition to the oxidation of C9, an additional dehydrogenation between C7 and C8 can occur to give a likely shunt product. The next biosynthetic step is the intramolecular aldol condensation catalyzed by the newly identified aldolase FrzH to yield an aza-tricyclic product with the formation of a C9-C3' bond. The short-chain dehydrogenase/reductase FrzI then produces dephospho-(-)-FR901483 that is phosphorylated at C4'-OH into (-)-FR901483 by the phosphotransferase FrzJ. The sequence is that of Phosphotransferase FrzJ from Cladobotryum sp.